The following is a 703-amino-acid chain: Methionine--tRNA ligase (703 aa).

Positions 12–22 (PYANGPLHIGH) match the 'HIGH' region motif. Zn(2+) is bound by residues Cys-143, Cys-146, Cys-156, and Cys-159. The 'KMSKS' region motif lies at 331 to 335 (KMSKT). An ATP-binding site is contributed by Lys-334. 2 stretches are compositionally biased toward low complexity: residues 556–568 (AAPQ…PAKG) and 577–594 (EAPA…AAES). Disordered regions lie at residues 556 to 594 (AAPQ…AAES) and 682 to 703 (GPGG…SEVK). Residues 602-703 (DFAKVVLKAG…GDVAPGSEVK (102 aa)) enclose the tRNA-binding domain.

The protein belongs to the class-I aminoacyl-tRNA synthetase family. MetG type 1 subfamily. In terms of assembly, homodimer. Zn(2+) is required as a cofactor.

It localises to the cytoplasm. The catalysed reaction is tRNA(Met) + L-methionine + ATP = L-methionyl-tRNA(Met) + AMP + diphosphate. Functionally, is required not only for elongation of protein synthesis but also for the initiation of all mRNA translation through initiator tRNA(fMet) aminoacylation. The sequence is that of Methionine--tRNA ligase from Myxococcus xanthus (strain DK1622).